Consider the following 435-residue polypeptide: Serine hydroxymethyltransferase 2 (435 aa).

(6S)-5,6,7,8-tetrahydrofolate-binding positions include leucine 135 and 139–141 (GHL). N6-(pyridoxal phosphate)lysine is present on lysine 244. Glutamate 260 contacts (6S)-5,6,7,8-tetrahydrofolate.

This sequence belongs to the SHMT family. In terms of assembly, homodimer. It depends on pyridoxal 5'-phosphate as a cofactor.

The protein localises to the cytoplasm. It catalyses the reaction (6R)-5,10-methylene-5,6,7,8-tetrahydrofolate + glycine + H2O = (6S)-5,6,7,8-tetrahydrofolate + L-serine. It functions in the pathway one-carbon metabolism; tetrahydrofolate interconversion. The protein operates within amino-acid biosynthesis; glycine biosynthesis; glycine from L-serine: step 1/1. Functionally, catalyzes the reversible interconversion of serine and glycine with tetrahydrofolate (THF) serving as the one-carbon carrier. This reaction serves as the major source of one-carbon groups required for the biosynthesis of purines, thymidylate, methionine, and other important biomolecules. Also exhibits THF-independent aldolase activity toward beta-hydroxyamino acids, producing glycine and aldehydes, via a retro-aldol mechanism. The chain is Serine hydroxymethyltransferase 2 from Vibrio cholerae serotype O1 (strain ATCC 39315 / El Tor Inaba N16961).